A 342-amino-acid polypeptide reads, in one-letter code: Protein FDO1 (342 aa).

Disordered regions lie at residues 1 to 36 (MEEN…NGSD), 57 to 76 (MSPM…TLSV), and 299 to 322 (GRTI…GNRT). Polar residues predominate over residues 15–25 (ATWSNQMGSPE). Over residues 308 to 319 (NTKDESIQDSHG) the composition is skewed to basic and acidic residues.

Interacts with FKH1.

In concert with FKH1, plays a role in directionality of mating type switching by controlling which donor mating-type locus is inserted into MAT locus during mating type switching. The sequence is that of Protein FDO1 from Saccharomyces cerevisiae (strain ATCC 204508 / S288c) (Baker's yeast).